Consider the following 128-residue polypeptide: Class I hydrophobin 19 (128 aa).

Disulfide bonds link Cys48–Cys107, Cys55–Cys101, Cys56–Cys88, and Cys108–Cys121. Asn110 carries N-linked (GlcNAc...) asparagine glycosylation.

Belongs to the fungal hydrophobin family. Self-assembles to form functional amyloid fibrils called rodlets. Self-assembly into fibrillar rodlets occurs spontaneously at hydrophobic:hydrophilic interfaces and the rodlets further associate laterally to form amphipathic monolayers.

Its subcellular location is the secreted. The protein localises to the cell wall. Aerial growth, conidiation, and dispersal of filamentous fungi in the environment rely upon a capability of their secreting small amphipathic proteins called hydrophobins (HPBs) with low sequence identity. Class I can self-assemble into an outermost layer of rodlet bundles on aerial cell surfaces, conferring cellular hydrophobicity that supports fungal growth, development and dispersal; whereas Class II form highly ordered films at water-air interfaces through intermolecular interactions but contribute nothing to the rodlet structure. This Pleurotus ostreatus (strain PC15) (Oyster mushroom) protein is Class I hydrophobin 19.